Reading from the N-terminus, the 188-residue chain is Adenine phosphoribosyltransferase (188 aa).

It belongs to the purine/pyrimidine phosphoribosyltransferase family. Homodimer.

It is found in the cytoplasm. The catalysed reaction is AMP + diphosphate = 5-phospho-alpha-D-ribose 1-diphosphate + adenine. It participates in purine metabolism; AMP biosynthesis via salvage pathway; AMP from adenine: step 1/1. Catalyzes a salvage reaction resulting in the formation of AMP, that is energically less costly than de novo synthesis. The polypeptide is Adenine phosphoribosyltransferase (Paraburkholderia xenovorans (strain LB400)).